Reading from the N-terminus, the 359-residue chain is Aminomethyltransferase (359 aa).

The protein belongs to the GcvT family. In terms of assembly, the glycine cleavage system is composed of four proteins: P, T, L and H.

It catalyses the reaction N(6)-[(R)-S(8)-aminomethyldihydrolipoyl]-L-lysyl-[protein] + (6S)-5,6,7,8-tetrahydrofolate = N(6)-[(R)-dihydrolipoyl]-L-lysyl-[protein] + (6R)-5,10-methylene-5,6,7,8-tetrahydrofolate + NH4(+). In terms of biological role, the glycine cleavage system catalyzes the degradation of glycine. The chain is Aminomethyltransferase from Alcanivorax borkumensis (strain ATCC 700651 / DSM 11573 / NCIMB 13689 / SK2).